Here is a 291-residue protein sequence, read N- to C-terminus: Bis(5'-nucleosyl)-tetraphosphatase, symmetrical (291 aa).

It belongs to the Ap4A hydrolase family.

It carries out the reaction P(1),P(4)-bis(5'-adenosyl) tetraphosphate + H2O = 2 ADP + 2 H(+). Functionally, hydrolyzes diadenosine 5',5'''-P1,P4-tetraphosphate to yield ADP. This Coxiella burnetii (strain Dugway 5J108-111) protein is Bis(5'-nucleosyl)-tetraphosphatase, symmetrical.